Consider the following 330-residue polypeptide: BTB/POZ domain-containing adapter for CUL3-mediated RhoA degradation protein 1 (330 aa).

The segment at 1 to 34 (MSAEASGSSGGHAVTVSGSSPSSSSHVGEEKPGR) is disordered. Residues 40-108 (KYVKLNVGGT…LRDGTVPLPD (69 aa)) enclose the BTB domain. Low complexity predominate over residues 282–291 (GGVSSSGAGQ). The disordered stretch occupies residues 282–304 (GGVSSSGAGQSEEEGAGAGGGDR).

The protein belongs to the BACURD family.

Its subcellular location is the nucleus. In terms of biological role, substrate-specific adapter of a BCR (BTB-CUL3-RBX1) E3 ubiquitin-protein ligase complex required for synaptic transmission. The BCR(KCTD13) E3 ubiquitin ligase complex mediates the ubiquitination of RHOA, leading to its degradation by the proteasome, thereby regulating the actin cytoskeleton and promoting synaptic transmission. This is BTB/POZ domain-containing adapter for CUL3-mediated RhoA degradation protein 1 from Danio rerio (Zebrafish).